A 2663-amino-acid polypeptide reads, in one-letter code: Ankyrin repeat domain-containing protein 11 (2663 aa).

2 disordered regions span residues 1–90 (MPKG…KEPV) and 128–169 (SANS…ERGE). Basic and acidic residues-rich tracts occupy residues 21–54 (MVEK…VRER) and 69–90 (EQKD…KEPV). Polar residues predominate over residues 128-155 (SANSPVDTTPKHPSQSTVCQKGTPNSAS). Residues 156–169 (KTKDKVNKRNERGE) show a composition bias toward basic and acidic residues. 4 ANK repeats span residues 167–196 (RGET…DVNV), 200–229 (AGWT…EVNT), 233–262 (DDDT…NPQQ), and 266–292 (KGET…YTSS). Serine 276 carries the phosphoserine modification. Disordered regions lie at residues 289 to 380 (YTSS…SNSF), 398 to 647 (APKK…GQCS), and 723 to 783 (DTNK…NDLK). Positions 295–305 (SSTESSEEEDA) are enriched in acidic residues. A compositionally biased stretch (polar residues) spans 309–320 (APSSSVDGNNTD). Basic and acidic residues predominate over residues 356 to 376 (DRVPPVDDKHLLKKDYRKETK). Serine 408 bears the Phosphoserine mark. The residue at position 410 (threonine 410) is a Phosphothreonine. Serine 411 carries the phosphoserine modification. Basic and acidic residues predominate over residues 438-451 (KTREPSNAKQQKEK). The segment covering 452–462 (NKVKKKRKKET) has biased composition (basic residues). Residues 463-477 (KGREVRFGKRSDKFC) are compositionally biased toward basic and acidic residues. The span at 481-493 (SESESSESGEDDR) shows a compositional bias: acidic residues. Residues 513 to 531 (SLFSSLSASSTSSHGSSAA) are compositionally biased toward low complexity. Positions 539 to 550 (TDQHTKHWRTDN) are enriched in basic and acidic residues. The segment covering 551 to 562 (WKTISSPAWSEV) has biased composition (polar residues). The segment covering 576–588 (ESDYSSEGSSVES) has biased composition (low complexity). Composition is skewed to basic residues over residues 591-602 (PVRKRQEHRKRA) and 629-641 (VKKH…HKNK). Phosphoserine is present on serine 834. Basic and acidic residues-rich tracts occupy residues 881 to 928 (VKED…EKHK), 935 to 1043 (SEKD…KSIL), 1059 to 1090 (KKDT…KEKA), and 1099 to 1112 (FSEK…KEKS). 2 disordered regions span residues 881-1043 (VKED…KSIL) and 1059-1393 (KKDT…GQYE). Serine 1079 carries the post-translational modification Phosphoserine. Threonine 1120 bears the Phosphothreonine mark. Serine 1123 is modified (phosphoserine). 3 stretches are compositionally biased toward basic and acidic residues: residues 1142 to 1301 (DLPR…DKIS), 1330 to 1347 (GDDK…LKEK), and 1359 to 1393 (KSHD…GQYE). Residue threonine 1419 is modified to Phosphothreonine. 5 stretches are compositionally biased toward basic and acidic residues: residues 1424–1446 (STEK…KELK), 1466–1545 (REKW…KGDP), 1556–1574 (APSK…KLLG), 1587–1597 (LSQKDLEIEER), and 1605–1639 (MKQM…DIPA). The interval 1424-1710 (STEKKDKNDS…TGVPTPTSVL (287 aa)) is disordered. Serine 1509 bears the Phosphoserine mark. Serine 1692 is modified (phosphoserine). Residues 1698-1710 (SRPTGVPTPTSVL) are compositionally biased toward polar residues. Residue serine 1792 is modified to Phosphoserine. The tract at residues 1814–1836 (SVPAASSYDSPMPPSMEDRAPLP) is disordered. Serine 1847 is modified (phosphoserine). Tyrosine 1850 and tyrosine 1851 each carry phosphotyrosine. Serine 1852, serine 1859, and serine 1990 each carry phosphoserine. Disordered stretches follow at residues 1988 to 2019 (PESP…PAPP) and 2131 to 2406 (LDLG…STQQ). Low complexity-rich tracts occupy residues 2310-2324 (IQPE…AEAP) and 2391-2406 (RSTQ…STQQ). Residues 2369–2663 (AKARGSEDDD…VNDDFVLLPA (295 aa)) are important for protein degradation.

As to quaternary structure, interacts with the PAS region of the p160 coactivators. Subject to proteasomal degradation which is probably essential to regulate its activity.

Its subcellular location is the nucleus. Its function is as follows. Chromatin regulator which modulates histone acetylation and gene expression in neural precursor cells. May recruit histone deacetylases (HDACs) to the p160 coactivators/nuclear receptor complex to inhibit ligand-dependent transactivation. Has a role in proliferation and development of cortical neural precursors. May also regulate bone homeostasis. This Homo sapiens (Human) protein is Ankyrin repeat domain-containing protein 11 (ANKRD11).